Here is a 196-residue protein sequence, read N- to C-terminus: Imidazoleglycerol-phosphate dehydratase (196 aa).

The protein belongs to the imidazoleglycerol-phosphate dehydratase family.

The protein resides in the cytoplasm. The catalysed reaction is D-erythro-1-(imidazol-4-yl)glycerol 3-phosphate = 3-(imidazol-4-yl)-2-oxopropyl phosphate + H2O. It functions in the pathway amino-acid biosynthesis; L-histidine biosynthesis; L-histidine from 5-phospho-alpha-D-ribose 1-diphosphate: step 6/9. In Halobacterium salinarum (strain ATCC 700922 / JCM 11081 / NRC-1) (Halobacterium halobium), this protein is Imidazoleglycerol-phosphate dehydratase.